A 353-amino-acid polypeptide reads, in one-letter code: C2 calcium-dependent domain-containing protein 4D (353 aa).

A disordered region spans residues 135-191 (CRAPDSDTASSPDSSPFGSPRPGLGRRRVSRPHSLSPEKASSADTSPHSPRRAGPPT). A compositionally biased stretch (low complexity) spans 140–150 (SDTASSPDSSP). Residues 217–343 (RGGQLRLSTE…PPLGGGLGPG (127 aa)) enclose the C2 domain.

This Homo sapiens (Human) protein is C2 calcium-dependent domain-containing protein 4D (C2CD4D).